Here is an 87-residue protein sequence, read N- to C-terminus: DNA-directed RNA polymerase subunit omega (87 aa).

The protein belongs to the RNA polymerase subunit omega family. The RNAP catalytic core consists of 2 alpha, 1 beta, 1 beta' and 1 omega subunit. When a sigma factor is associated with the core the holoenzyme is formed, which can initiate transcription.

It carries out the reaction RNA(n) + a ribonucleoside 5'-triphosphate = RNA(n+1) + diphosphate. Functionally, promotes RNA polymerase assembly. Latches the N- and C-terminal regions of the beta' subunit thereby facilitating its interaction with the beta and alpha subunits. The protein is DNA-directed RNA polymerase subunit omega of Thioalkalivibrio sulfidiphilus (strain HL-EbGR7).